A 261-amino-acid polypeptide reads, in one-letter code: High-affinity zinc uptake system membrane protein ZnuB (261 aa).

7 helical membrane-spanning segments follow: residues 8-28 (ALLT…FVVW), 54-74 (VNPY…MVWL), 84-104 (TLLG…VGLL), 125-145 (TDLI…IYFW), 171-191 (ILMI…GALI), 214-234 (VGWA…LSAF), and 236-256 (DTAA…LSLF).

This sequence belongs to the ABC-3 integral membrane protein family.

Its subcellular location is the cell inner membrane. Involved in the high-affinity zinc uptake transport system. This chain is High-affinity zinc uptake system membrane protein ZnuB (znuB), found in Haemophilus influenzae (strain ATCC 51907 / DSM 11121 / KW20 / Rd).